An 878-amino-acid polypeptide reads, in one-letter code: Phosphoenolpyruvate carboxylase (878 aa).

Catalysis depends on residues His138 and Lys545.

This sequence belongs to the PEPCase type 1 family. Mg(2+) serves as cofactor.

It carries out the reaction oxaloacetate + phosphate = phosphoenolpyruvate + hydrogencarbonate. In terms of biological role, forms oxaloacetate, a four-carbon dicarboxylic acid source for the tricarboxylic acid cycle. The sequence is that of Phosphoenolpyruvate carboxylase from Shewanella halifaxensis (strain HAW-EB4).